Consider the following 197-residue polypeptide: Probable molybdenum cofactor guanylyltransferase (197 aa).

GTP-binding positions include 6–8, Lys-18, Asp-65, and Asp-97; that span reads LAG. Residue Asp-97 coordinates Mg(2+).

It belongs to the MobA family. The cofactor is Mg(2+).

It is found in the cytoplasm. It catalyses the reaction Mo-molybdopterin + GTP + H(+) = Mo-molybdopterin guanine dinucleotide + diphosphate. Functionally, transfers a GMP moiety from GTP to Mo-molybdopterin (Mo-MPT) cofactor (Moco or molybdenum cofactor) to form Mo-molybdopterin guanine dinucleotide (Mo-MGD) cofactor. This Staphylococcus carnosus (strain TM300) protein is Probable molybdenum cofactor guanylyltransferase.